The following is a 182-amino-acid chain: Ribulose bisphosphate carboxylase small subunit, chloroplastic (182 aa).

The transit peptide at 1 to 58 (MACSMISSATVAAVSRASPAQSSMVAPFTCLKSTSAFPVTQKTNNDITSIASNGGRVQ) directs the protein to the chloroplast.

This sequence belongs to the RuBisCO small chain family. Heterohexadecamer of 8 large and 8 small subunits.

Its subcellular location is the plastid. The protein localises to the chloroplast. RuBisCO catalyzes two reactions: the carboxylation of D-ribulose 1,5-bisphosphate, the primary event in carbon dioxide fixation, as well as the oxidative fragmentation of the pentose substrate. Both reactions occur simultaneously and in competition at the same active site. Although the small subunit is not catalytic it is essential for maximal activity. This Betula pendula (European white birch) protein is Ribulose bisphosphate carboxylase small subunit, chloroplastic.